We begin with the raw amino-acid sequence, 215 residues long: MLPYKTLLLALGFFFTVQCHFFASASSFDIADNNQNGVRLLRSPEKTDEERGAVDALKSELSFMKLNWAARSKITPKEKLVAKQAKEMSNTKEKLSKIEAKLQAKAVKAEQKVKDQAIKAEQNLKAKNEKAAQQLKALQQNELEKLAKQAAKDDKMYNRWLMAEMTPDDVYKKFKFKELAKKGIYPTTSVNYKHYKNYRTIYYARYPKLLEKLDA.

A signal peptide spans 1-19; that stretch reads MLPYKTLLLALGFFFTVQC. The RxLR-dEER signature appears at 39 to 51; it reads RLLRSPEKTDEER. Residues 81–149 are a coiled coil; the sequence is VAKQAKEMSN…QNELEKLAKQ (69 aa).

Belongs to the RxLR effector family.

Its subcellular location is the secreted. It localises to the host cell membrane. In terms of biological role, effector that might be involved in host plant infection. This Phytophthora infestans (strain T30-4) (Potato late blight agent) protein is RxLR effector protein PITG_00582.